A 95-amino-acid polypeptide reads, in one-letter code: Probable FAD-linked sulfhydryl oxidase OPG072 (95 aa).

Over 1-8 (MNPKHWGR) the chain is Intravirion. The 95-residue stretch at 1 to 95 (MNPKHWGRAA…AIDVSKVKPL (95 aa)) folds into the ERV/ALR sulfhydryl oxidase domain. Residues 9-25 (AAWTIIFIVLSQAGLDG) traverse the membrane as a helical segment. At 26–95 (NIEACKRKLY…AIDVSKVKPL (70 aa)) the chain is on the virion surface side. A disulfide bond links Cys-43 and Cys-46.

This sequence belongs to the orthopoxvirus OPG072 family. In terms of assembly, interacts with OPG128; this interaction involves formation of a transient disulfide-bonded intermediate, allowing disulfide bond transfer. The cofactor is FAD.

Its subcellular location is the virion membrane. The protein localises to the host cytoplasm. The catalysed reaction is 2 R'C(R)SH + O2 = R'C(R)S-S(R)CR' + H2O2. Functionally, FAD-dependent sulfhydryl oxidase that catalyzes disulfide bond formation. The complete pathway for formation of disulfide bonds in intracellular virion membrane proteins sequentially involves thiol-disulfide transfer between OPG072, OPG128 and OPG088. This chain is Probable FAD-linked sulfhydryl oxidase OPG072 (OPG072), found in Variola virus (isolate Human/India/Ind3/1967) (VARV).